Reading from the N-terminus, the 99-residue chain is Putative regulatory protein Kole_1849 (99 aa).

Belongs to the RemA family.

This is Putative regulatory protein Kole_1849 from Kosmotoga olearia (strain ATCC BAA-1733 / DSM 21960 / TBF 19.5.1).